A 121-amino-acid chain; its full sequence is Basic phospholipase A2 homolog piratoxin-2 (121 aa).

7 disulfide bridges follow: Cys-26–Cys-115, Cys-28–Cys-44, Cys-43–Cys-95, Cys-49–Cys-121, Cys-50–Cys-88, Cys-57–Cys-81, and Cys-75–Cys-86. Positions 105–117 are important for membrane-damaging activities in eukaryotes and bacteria; heparin-binding; sequence KKYRYHLKPFCKK.

The protein belongs to the phospholipase A2 family. Group II subfamily. K49 sub-subfamily. In terms of assembly, homodimer; non-covalently linked. As to expression, expressed by the venom gland.

The protein localises to the secreted. Snake venom phospholipase A2 (PLA2) homolog that lacks enzymatic activity. Shows myotoxic activity and edema-inducing activities in vivo. A model of myotoxic mechanism has been proposed: an apo Lys49-PLA2 is activated by the entrance of a hydrophobic molecule (e.g. fatty acid) at the hydrophobic channel of the protein leading to a reorientation of a monomer. This reorientation causes a transition between 'inactive' to 'active' states, causing alignment of C-terminal and membrane-docking sites (MDoS) side-by-side and putting the membrane-disruption sites (MDiS) in the same plane, exposed to solvent and in a symmetric position for both monomers. The MDoS region stabilizes the toxin on membrane by the interaction of charged residues with phospholipid head groups. Subsequently, the MDiS region destabilizes the membrane with penetration of hydrophobic residues. This insertion causes a disorganization of the membrane, allowing an uncontrolled influx of ions (i.e. calcium and sodium), and eventually triggering irreversible intracellular alterations and cell death. This chain is Basic phospholipase A2 homolog piratoxin-2, found in Bothrops pirajai (Piraja's lancehead).